The chain runs to 463 residues: Female germline-specific tumor suppressor gld-1 (463 aa).

Residues 1 to 10 (MPSCTTPTYG) are compositionally biased toward polar residues. The tract at residues 1-76 (MPSCTTPTYG…RAPPPARLTL (76 aa)) is disordered. A compositionally biased stretch (low complexity) spans 11–31 (VSTQLESQSSESPSRSSVMTP). Residues 135 to 205 (PTATEPIEVE…PEPAGDMISI (71 aa)) are qua1 domain; involved in homodimerization. The KH domain occupies 208–260 (KIYVPKNEYPDYNFVGRILGPRGMTAKQLEQDTGCKIMVRGKGSMRDKSKESA). Residues 305-336 (APEGTDELKRKQLMELAIINGTYRPMKSPNPA) are qua2 domain; involved in RNA binding. A disordered region spans residues 443-463 (NTNVSPSGASPSASSVNNTSF). Low complexity predominate over residues 447–457 (SPSGASPSASS).

In terms of assembly, homodimer. In terms of processing, phosphorylated by cdk-2 which may negatively regulate its expression in distal mitotic germline cells. Undergoes proteasomal degradation in proximal oocytes following mating. Expressed in proximal and distal oocytes in female worms but is eliminated from proximal oocytes following mating.

Its function is as follows. RNA-binding protein which recognizes the 5'-UACUCAU-3' RNA consensus sequence. Binds sequences in both the 5'coding and the 3'-UTR region of rme-2 mRNA. Binds sequences in the 3'-UTR region of cye-1 mRNA. Binds to cyb-2.1, cyb-2.2 and cyb-3 mRNA. Binds sequences in the 3'-UTR region of tra-2 mRNA. Binds to the 3' UTR of Notch receptor homolog glp-1, thereby repressing glp-1 translation in the embryo. Binding to the glp-1 3' UTR is inhibited by pos-1 binding to an overlapping binding site in the glp-1 3' UTR. Germ line-specific tumor suppressor essential for oogenesis. Controls the spatial pattern of translation of multiple oogenesis specific mRNAs (e.g. yolk receptor rme-2) by repression of translation during early meiotic prophase (leptotene to pachytene) and then derepression of translation during diplotene/ diakinesis, following its degradation. Also functions to promote the male sexual fate in the hermaphrodite germline but not the male germline. Represses translation of the vacuolar ATPase component vha-13 in the distal gonad. Functions redundantly with gld-2 to promote the initiation of meiotic development and/or inhibit stem cell proliferation. By regulating cye-1 expression, prevents entry into mitosis in meiotic germline cells. The protein is Female germline-specific tumor suppressor gld-1 (gld-1) of Caenorhabditis elegans.